Reading from the N-terminus, the 228-residue chain is Small ribosomal subunit protein uS2 (228 aa).

The protein belongs to the universal ribosomal protein uS2 family.

The sequence is that of Small ribosomal subunit protein uS2 from Blochmanniella pennsylvanica (strain BPEN).